Consider the following 582-residue polypeptide: uncharacterized protein (582 aa).

Basic and acidic residues predominate over residues 1 to 23 (MAHEGSRQVRDRGVTRSKAEKVR). Disordered regions lie at residues 1–29 (MAHEGSRQVRDRGVTRSKAEKVRPPTVPV), 110–133 (AVAEDPTWGEDEEPSACTTDSWAQ), and 147–221 (LENF…SSAG). Ser-242 carries the phosphoserine modification. 2 disordered regions span residues 310 to 331 (RPSASCQQQRAGHSDVRLSAHH) and 551 to 582 (LSSGVPEQEDKEGSTFPPVEQHPIQTGAPKPR). The segment covering 311-320 (PSASCQQQRA) has biased composition (polar residues).

This is an uncharacterized protein from Homo sapiens (Human).